The primary structure comprises 282 residues: Undecaprenyl-diphosphatase (282 aa).

7 consecutive transmembrane segments (helical) span residues 45–65, 86–106, 114–134, 151–171, 196–216, 224–244, and 256–276; these read AFMEMFNVVIQLGAILAVVFI, WQLWAKVVVASLPAVIIGIPL, FHNFVSVAIMLIIYGIAFILI, LPYKTALYIGFFQVLSLFPGT, FFLGIPVMFGASGIKVLKFIL, GQLTLLLVAMIVAFGVSMYVI, and FTVFGKYRIGLGALLLIYWVF.

The protein belongs to the UppP family.

Its subcellular location is the cell membrane. The enzyme catalyses di-trans,octa-cis-undecaprenyl diphosphate + H2O = di-trans,octa-cis-undecaprenyl phosphate + phosphate + H(+). Functionally, catalyzes the dephosphorylation of undecaprenyl diphosphate (UPP). Confers resistance to bacitracin. The polypeptide is Undecaprenyl-diphosphatase (Streptococcus gordonii (strain Challis / ATCC 35105 / BCRC 15272 / CH1 / DL1 / V288)).